The following is a 343-amino-acid chain: Ribosomal RNA small subunit methyltransferase C (343 aa).

This sequence belongs to the methyltransferase superfamily. RsmC family. In terms of assembly, monomer.

The protein resides in the cytoplasm. It carries out the reaction guanosine(1207) in 16S rRNA + S-adenosyl-L-methionine = N(2)-methylguanosine(1207) in 16S rRNA + S-adenosyl-L-homocysteine + H(+). Functionally, specifically methylates the guanine in position 1207 of 16S rRNA in the 30S particle. This Escherichia coli O6:H1 (strain CFT073 / ATCC 700928 / UPEC) protein is Ribosomal RNA small subunit methyltransferase C.